The following is a 152-amino-acid chain: Ribosome maturation factor RimP (152 aa).

Belongs to the RimP family.

The protein localises to the cytoplasm. Its function is as follows. Required for maturation of 30S ribosomal subunits. The polypeptide is Ribosome maturation factor RimP (Yersinia enterocolitica serotype O:8 / biotype 1B (strain NCTC 13174 / 8081)).